Reading from the N-terminus, the 1817-residue chain is MDLSAVRIQEVQNVLHAMQKILECPICLELIKEPVSTQCDHIFCKFCMLKLLNQKKGPSQCPLCKNEITKRSLQGSARFSQLVEELLKIIDAFELDTGMQCANGFSFSKKKNSSSELLNEDASIIQSVGYRNRVKKLQQIESGSATLKDSLSVQLSNLGIVRSMKKNRQTQPQNKSVYIALESDSSEERVNAPDGCSVRDQELFQIAPGGAGDEGKLNSAKKAACDFSEGIRNIEHHQCSDKDLNPTENHATERHPEKCPRISVANVHVEPCGTDARASSLQRGTRSLLFTEDRLDAEKAEFCDRSKQSGAAVSQQSRWADSKETCNGRPVPRTEGKADPNVDSLCGRKQWNHPKSLCPENSGATTDVPWITLNSSIQKVNEWFSRTGEMLTSDNASDRRPASNAEAAVVLEVSNEVDGCFSSSKKIDLVAPDPDNAVMCTSGRDFSKPVENIINDKIFGKTYQRKGSRPHLNHVTEIIGTFTTEPQIIQEQPFTNKLKRKRSTCLHPEDFIKKADLTVVQRISENLNQGTDQMEPNDQAMSITSNGQENRATGNDLQRGRNAHPIESLRKEPAFTAKAKSISNSISDLEVELNVHSSKAPKKNRLRRKSTRCVLPLEPISRNPSPPTCAELQIESCGSSEETKKNNSNQTPAGHIREPQLIEDTEPAADAKKNEPNEHIRKRSASDAFPEEKLMNKAGLLTSCSSPRKPQGPVNPSPERKGIEQLEMCQMPDNNKELGDLVLGGEPSGKPTEPSEESTSVSLVPDTDYDTQNSVSILEANTVRYARTGSVQCMTQFVASENPKELVHGSNNAGSGSECFKHPLRHELNHNQETIEMEDSELDTQYLQNTFQVSKRQSFALFSKLRSPQKDCTLVGARSVPSREPSPKVTSRGEQKERQGQEESEISHVQAVTVTVGLPVPCQEGKPGAVTMCADVSRLCPSSHYRSCENGLNTTDKSGISQNSHFRQSVSPLRSSIKTDNRKTLTEGRFEKHTERGMGNETAVQSTIHTISLNNRGDACLEASSGSVIEVHSTGENVQGQLDRNRGPKVNTVSLLDSTQPGVSKQSAPVSDKYLEIKQESKAVSADFSPCLFSDHLEKPMRSDKTFQVCSETPDDLLDDVEIQENASFGEGGITEKSAIFNGSVLRRESSRSPSPVTHASKSRSLHRGSRKLEFSEESDSTEDEDLPCFQHLLSRVSSTPELTRCSSVVTQRVPEKAKGTQAPRKSSISDCNNEVILGEASQEYQFSEDAKCSGSMFSSQHSAALGSPANALSQDPDFNPPSKQRRHQAENEEAFLSDKELISDHEDMAACLEEASDQEEDSIIPDSVASGYESEANLSEDCSQSDILTTQQRATMKDNLIKLQQEMAQLEAVLEQHGSQPSGHPPCLPADPCALEDLPDPEQNRSGTAILTSKNINENPVSQNPKRACDDKSQPQPPDGLPSGDKESGMRRPSPFKSPLTSSRCSARGHSRSLQNRNSTSQEELLQPAXLEKSCEPHNLTGRSCLPRQDLEGTPYPESGIRLVSSRDPDSESPKVSALVCTAPASTSALKISQGQVAGSCRSPAAGGADTAVVEIVSKIKPEVTSPKERAERDISMVVSGLTPKEVMIVQKFAEKYRLALTDVITEETTHVIIKTDAEFVCERTLKYFLGIAGGKWIVSYSWVIKSIQERKLLSVHEFEVKGDVVTGSNHQGPRRSRESQEKLFEGLQIYCCEPFTNMPKDELERMLQLCGASVVKELPLLTRDTGAHPIVLVQPSAWTEDNDCPDIGQLCKGRLVMWDWVLDSISVYRCRDLDAYLVQNITCGRDGSEPQDSND.

Residue M1 is modified to N-acetylmethionine. The segment at 24–65 adopts an RING-type zinc-finger fold; that stretch reads CPICLELIKEPVSTQCDHIFCKFCMLKLLNQKKGPSQCPLCK. K109 participates in a covalent cross-link: Glycyl lysine isopeptide (Lys-Gly) (interchain with G-Cter in SUMO2). Phosphoserine is present on S114. A Glycyl lysine isopeptide (Lys-Gly) (interchain with G-Cter in SUMO2) cross-link involves residue K299. The disordered stretch occupies residues 305–346; that stretch reads RSKQSGAAVSQQSRWADSKETCNGRPVPRTEGKADPNVDSLC. Residues 308-319 show a composition bias toward polar residues; the sequence is QSGAAVSQQSRW. Over residues 320 to 340 the composition is skewed to basic and acidic residues; the sequence is ADSKETCNGRPVPRTEGKADP. K337 participates in a covalent cross-link: Glycyl lysine isopeptide (Lys-Gly) (interchain with G-Cter in SUMO2). The residue at position 393 (S393) is a Phosphoserine. K457 is covalently cross-linked (Glycyl lysine isopeptide (Lys-Gly) (interchain with G-Cter in SUMO2)). Residues 497–503 carry the Nuclear localization signal motif; the sequence is KLKRKRS. Glycyl lysine isopeptide (Lys-Gly) (interchain with G-Cter in SUMO2) cross-links involve residues K513 and K578. Polar residues predominate over residues 640–652; that stretch reads SEETKKNNSNQTP. Disordered stretches follow at residues 640–720, 735–768, 874–907, and 959–982; these read SEET…SPER, NKEL…PDTD, LVGA…SEIS, and GISQ…TDNR. The segment covering 669 to 679 has biased composition (basic and acidic residues); sequence ADAKKNEPNEH. Residues S686, S706, and S717 each carry the phosphoserine modification. Over residues 744–760 the composition is skewed to low complexity; sequence GGEPSGKPTEPSEESTS. The segment covering 891–901 has biased composition (basic and acidic residues); the sequence is SRGEQKERQGQ. The span at 959 to 976 shows a compositional bias: polar residues; sequence GISQNSHFRQSVSPLRSS. Phosphoserine; by CHEK2 is present on S975. Residue K1049 forms a Glycyl lysine isopeptide (Lys-Gly) (interchain with G-Cter in SUMO2) linkage. Positions 1146 to 1185 are disordered; the sequence is LRRESSRSPSPVTHASKSRSLHRGSRKLEFSEESDSTEDE. Phosphoserine occurs at positions 1153 and 1155. The segment covering 1161–1170 has biased composition (basic residues); that stretch reads SKSRSLHRGS. Over residues 1176–1185 the composition is skewed to acidic residues; it reads SEESDSTEDE. S1181 and S1242 each carry phosphoserine. Residues 1259-1290 are disordered; it reads SSQHSAALGSPANALSQDPDFNPPSKQRRHQA. 3 positions are modified to phosphoserine: S1298, S1304, and S1344. T1351 bears the Phosphothreonine mark. The interval 1354-1381 is interaction with PALB2; it reads RATMKDNLIKLQQEMAQLEAVLEQHGSQ. Disordered stretches follow at residues 1375–1486 and 1498–1534; these read LEQH…QEEL and PHNL…DSES. S1380, S1414, and S1482 each carry phosphoserine. 2 stretches are compositionally biased toward polar residues: residues 1405–1426 and 1473–1485; these read NRSG…SQNP and RSLQ…SQEE. BRCT domains are found at residues 1588-1682 and 1701-1800; these read PKER…EFEV and SQEK…AYLV.

In terms of assembly, heterodimer with BARD1. Part of the BRCA1-associated genome surveillance complex (BASC), which contains BRCA1, MSH2, MSH6, MLH1, ATM, BLM, PMS2 and the MRE11-RAD50-NBN protein (MRN) complex. This association could be a dynamic process changing throughout the cell cycle and within subnuclear domains. Component of the BRCA1-A complex, at least composed of BRCA1, BARD1, UIMC1/RAP80, ABRAXAS1, BRCC3/BRCC36, BABAM2 and BABAM1/NBA1. Interacts (via the BRCT domains) with ABRAXAS1 (phosphorylated form); this is important for recruitment to sites of DNA damage. Can form a heterotetramer with two molecules of ABRAXAS1 (phosphorylated form). Component of the BRCA1-RBBP8 complex. Interacts (via the BRCT domains) with RBBP8 ('Ser-327' phosphorylated form); the interaction ubiquitinates RBBP8, regulates CHEK1 activation, and involves RBBP8 in BRCA1-dependent G2/M checkpoint control on DNA damage. Associates with RNA polymerase II holoenzyme. Interacts with SMC1A, NELFB, DCLRE1C, CLSPN. CHEK1, CHEK2, BAP1, BRCC3, UBXN1 and PCLAF. Interacts (via BRCT domains) with BRIP1 (phosphorylated form). Interacts with FANCD2 (ubiquitinated form). Interacts with H2AX (phosphorylated on 'Ser-140'). Interacts (via the BRCT domains) with ACACA (phosphorylated form); the interaction prevents dephosphorylation of ACACA. Part of a BRCA complex containing BRCA1, BRCA2 and PALB2. Interacts directly with PALB2; the interaction is essential for its function in HRR. Interacts directly with BRCA2; the interaction occurs only in the presence of PALB2 which serves as the bridging protein. Interacts (via the BRCT domains) with LMO4; the interaction represses the transcriptional activity of BRCA1. Interacts (via the BRCT domains) with CCAR2 (via N-terminus); the interaction represses the transcriptional activator activity of BRCA1. Interacts with EXD2. Interacts (via C-terminus) with DHX9; this interaction is direct and links BRCA1 to the RNA polymerase II holoenzyme. Interacts with DNA helicase ZGRF1; the interaction is increased following DNA damage induction. Post-translationally, phosphorylated in response to IR, UV, and various stimuli that cause checkpoint activation, probably by ATM or ATR. Phosphorylation at Ser-975 by CHEK2 regulates mitotic spindle assembly. Phosphorylation by AURKA regulates centrosomal microtubule nucleation. Autoubiquitinated, undergoes 'Lys-6'-linked polyubiquitination. 'Lys-6'-linked polyubiquitination does not promote degradation.

It localises to the nucleus. It is found in the chromosome. The protein localises to the cytoplasm. The catalysed reaction is S-ubiquitinyl-[E2 ubiquitin-conjugating enzyme]-L-cysteine + [acceptor protein]-L-lysine = [E2 ubiquitin-conjugating enzyme]-L-cysteine + N(6)-ubiquitinyl-[acceptor protein]-L-lysine.. It functions in the pathway protein modification; protein ubiquitination. In terms of biological role, E3 ubiquitin-protein ligase that specifically mediates the formation of 'Lys-6'-linked polyubiquitin chains and plays a central role in DNA repair by facilitating cellular responses to DNA damage. It is unclear whether it also mediates the formation of other types of polyubiquitin chains. The BRCA1-BARD1 heterodimer coordinates a diverse range of cellular pathways such as DNA damage repair, ubiquitination and transcriptional regulation to maintain genomic stability. Regulates centrosomal microtubule nucleation. Required for appropriate cell cycle arrests after ionizing irradiation in both the S-phase and the G2 phase of the cell cycle. Required for FANCD2 targeting to sites of DNA damage. Inhibits lipid synthesis by binding to inactive phosphorylated ACACA and preventing its dephosphorylation. Contributes to homologous recombination repair (HRR) via its direct interaction with PALB2, fine-tunes recombinational repair partly through its modulatory role in the PALB2-dependent loading of BRCA2-RAD51 repair machinery at DNA breaks. Component of the BRCA1-RBBP8 complex which regulates CHEK1 activation and controls cell cycle G2/M checkpoints on DNA damage via BRCA1-mediated ubiquitination of RBBP8. Acts as a transcriptional activator. This chain is Breast cancer type 1 susceptibility protein homolog (Brca1), found in Rattus norvegicus (Rat).